A 187-amino-acid chain; its full sequence is MIDKERIKAAVRELLIGIGEDPDREGLLETPDRVARMCEEIFAGLHQDPKSVVKVFQEENHEEMVMVKDIPIYSICEHHLLPFIGVAHVVYIPRKGKIMGLSKLARIVDIIARKPQLQERLGSEVANVIMESINPLGVAVVVEAEHLCMTMRGIKKAGSKTVTSALRGIIKTDARTRAEVMALINGR.

The Zn(2+) site is built by C76, H79, and C148.

Belongs to the GTP cyclohydrolase I family. Toroid-shaped homodecamer, composed of two pentamers of five dimers.

The enzyme catalyses GTP + H2O = 7,8-dihydroneopterin 3'-triphosphate + formate + H(+). The protein operates within cofactor biosynthesis; 7,8-dihydroneopterin triphosphate biosynthesis; 7,8-dihydroneopterin triphosphate from GTP: step 1/1. The protein is GTP cyclohydrolase 1 of Acetivibrio thermocellus (strain ATCC 27405 / DSM 1237 / JCM 9322 / NBRC 103400 / NCIMB 10682 / NRRL B-4536 / VPI 7372) (Clostridium thermocellum).